The primary structure comprises 810 residues: MPSAINAAVAQQTAAGSVPSTTSTTTEGTGGGTGGIYSAIISRNQPIIKVKEKTYEELHKKCLEENILYEDPDFPPNETSLFYSQKVPIKFEWKRPREICENPRFIIGGANRTDICQGELGDCWFLAAIACLTLNKKLLCRVIPHDQSFIQNYAGIFHFQFWRYGDWVDVIIDDCLPTYNNQLVFTKSSQRNEFWSALLEKAYAKLHGSYEALKGGNTTEAMEDFTGGVIEFYEIKDAPKDIYKIMKHAIARGSLMASSIDDNLGFHYGAAPRSDIGELIARMVKNLENAQMTYSTVDYQGTDERPAWTIMPMQYETRMSCGLVKGHAYSVTAVEETTYKGEKMRLVRLRNPWGQVEWNGPWSDKSEEWNFIDEEEKIRLQHKIAEDGEFWISLEDFMRHFTKLEICNLTPDTLEADKLQTWTVSVNEGRWVRGCSAGGCRNYPDTFWTNPQYRLKLLEEDDDPEDEEVICSFLVALMQKNRRKERKLGANLYTIGFAIYEVPKEMHGTKHHLQKDFFLYNASKARSKTYINMREISERFRLPPSEYVIIPSTYEPHQEGEFILRVFSEKRSLSEEVENMIEADRPSKKKKGKPIIFVSDRANSNKELTTDEDAGKDGEKTHVDEKKRSSAKAREKSEEETQFRNIFRQIAGDDMEICREELRNVLNNVVKKHKDLKTEGFELESSRSMIALMDTDGSGKINFDEFRHLWDKIKSWQKIFKHYDADHSGTINSYEMRNAVKDAGFRLNNQLYDIITMRYADKNMNIDFDSFICCFVRLDAMFRAFHAFDKDGDGIIKLNVLEWLQLTMYA.

Residues 9–27 (VAQQTAAGSVPSTTSTTTE) are compositionally biased toward low complexity. Residues 9–31 (VAQQTAAGSVPSTTSTTTEGTGG) form a disordered region. The 343-residue stretch at 68 to 410 (LYEDPDFPPN…FTKLEICNLT (343 aa)) folds into the Calpain catalytic domain. Catalysis depends on residues cysteine 123, histidine 327, and asparagine 351. The domain III stretch occupies residues 411–579 (PDTLEADKLQ…KRSLSEEVEN (169 aa)). The disordered stretch occupies residues 578-639 (ENMIEADRPS…SAKAREKSEE (62 aa)). The segment at 580-638 (MIEADRPSKKKKGKPIIFVSDRANSNKELTTDEDAGKDGEKTHVDEKKRSSAKAREKSE) is linker. A compositionally biased stretch (basic and acidic residues) spans 613 to 639 (DAGKDGEKTHVDEKKRSSAKAREKSEE). 4 EF-hand domains span residues 638–672 (EEET…VVKK), 681–714 (FELE…DKIK), 711–746 (DKIK…AGFR), and 776–810 (VRLD…TMYA). The tract at residues 639–809 (EETQFRNIFR…VLEWLQLTMY (171 aa)) is domain IV. Residues alanine 651, aspartate 654, glutamate 656, glutamate 661, aspartate 694, aspartate 696, serine 698, lysine 700, glutamate 705, aspartate 724, aspartate 726, serine 728, threonine 730, glutamate 735, aspartate 789, aspartate 791, aspartate 793, and isoleucine 795 each contribute to the Ca(2+) site.

This sequence belongs to the peptidase C2 family. In terms of assembly, homodimer; via EF-hand domain 4. Interacts with TTN/titin. Interacts with CMYA5; this interaction, which results in CMYA5 proteolysis, may protect CAPN3 from autolysis. Interacts with SIMC1. Interacts with UTP25; the interaction is required for CAPN3 translocation to the nucleolus. Skeletal muscle. Low levels in spleen, intestine and bone.

The protein localises to the cytoplasm. It is found in the nucleus. The protein resides in the nucleolus. The catalysed reaction is Broad endopeptidase activity.. Its activity is regulated as follows. Activated by micromolar concentrations of calcium and inhibited by calpastatin. In terms of biological role, calcium-regulated non-lysosomal thiol-protease. Proteolytically cleaves CTBP1. Mediates, with UTP25, the proteasome-independent degradation of p53/TP53. This chain is Calpain-3 (CAPN3), found in Gallus gallus (Chicken).